A 319-amino-acid polypeptide reads, in one-letter code: Ribonuclease Z (319 aa).

Zn(2+)-binding residues include histidine 62, histidine 64, aspartate 66, histidine 67, histidine 145, aspartate 215, and histidine 273. The Proton acceptor role is filled by aspartate 66.

The protein belongs to the RNase Z family. As to quaternary structure, homodimer. Requires Zn(2+) as cofactor.

The enzyme catalyses Endonucleolytic cleavage of RNA, removing extra 3' nucleotides from tRNA precursor, generating 3' termini of tRNAs. A 3'-hydroxy group is left at the tRNA terminus and a 5'-phosphoryl group is left at the trailer molecule.. In terms of biological role, zinc phosphodiesterase, which displays some tRNA 3'-processing endonuclease activity. Probably involved in tRNA maturation, by removing a 3'-trailer from precursor tRNA. This chain is Ribonuclease Z, found in Borrelia recurrentis (strain A1).